Consider the following 249-residue polypeptide: tRNA pseudouridine synthase A (249 aa).

The Nucleophile role is filled by aspartate 53. Residue tyrosine 111 coordinates substrate.

This sequence belongs to the tRNA pseudouridine synthase TruA family. As to quaternary structure, homodimer.

It catalyses the reaction uridine(38/39/40) in tRNA = pseudouridine(38/39/40) in tRNA. Formation of pseudouridine at positions 38, 39 and 40 in the anticodon stem and loop of transfer RNAs. The sequence is that of tRNA pseudouridine synthase A from Streptococcus gordonii (strain Challis / ATCC 35105 / BCRC 15272 / CH1 / DL1 / V288).